The sequence spans 137 residues: Fluoride-specific ion channel FluC 1 (137 aa).

A run of 4 helical transmembrane segments spans residues 4–24 (LIYI…YYLG), 37–57 (LATL…TTYI), 67–87 (VITG…TFSV), and 100–120 (IAFL…GLGY). Glycine 77 and threonine 80 together coordinate Na(+).

The protein belongs to the fluoride channel Fluc/FEX (TC 1.A.43) family.

The protein resides in the cell membrane. The catalysed reaction is fluoride(in) = fluoride(out). Na(+) is not transported, but it plays an essential structural role and its presence is essential for fluoride channel function. Its function is as follows. Fluoride-specific ion channel. Important for reducing fluoride concentration in the cell, thus reducing its toxicity. This is Fluoride-specific ion channel FluC 1 from Bacillus thuringiensis subsp. konkukian (strain 97-27).